The following is a 363-amino-acid chain: Protein RecA (363 aa).

79-86 (GPESSGKT) is an ATP binding site.

Belongs to the RecA family.

It is found in the cytoplasm. In terms of biological role, can catalyze the hydrolysis of ATP in the presence of single-stranded DNA, the ATP-dependent uptake of single-stranded DNA by duplex DNA, and the ATP-dependent hybridization of homologous single-stranded DNAs. It interacts with LexA causing its activation and leading to its autocatalytic cleavage. The protein is Protein RecA of Borrelia duttonii (strain Ly).